The sequence spans 115 residues: ATP synthase subunit g, mitochondrial (115 aa).

An N-acetylmethionine modification is found at Met-1. Residues Ser-3 and Ser-62 each carry the phosphoserine modification.

It belongs to the ATPase g subunit family. As to quaternary structure, F-type ATPases have 2 components, CF(1) - the catalytic core - and CF(0) - the membrane proton channel. In yeast, the dimeric form of ATP synthase consists of 17 polypeptides: alpha, beta, gamma, delta, epsilon, 4 (B), 5 (OSCP), 6 (A), 8, 9 (C), d, E (Tim11), f, g, h, i/j and k. Phosphorylation on Ser-62 impairs ATP synthase dimerization.

Its subcellular location is the mitochondrion membrane. Functionally, mitochondrial membrane ATP synthase (F(1)F(0) ATP synthase or Complex V) produces ATP from ADP in the presence of a proton gradient across the membrane which is generated by electron transport complexes of the respiratory chain. F-type ATPases consist of two structural domains, F(1) - containing the extramembraneous catalytic core, and F(0) - containing the membrane proton channel, linked together by a central stalk and a peripheral stalk. During catalysis, ATP synthesis in the catalytic domain of F(1) is coupled via a rotary mechanism of the central stalk subunits to proton translocation. Part of the complex F(0) domain. Minor subunit located with subunit a in the membrane. The chain is ATP synthase subunit g, mitochondrial (ATP20) from Saccharomyces cerevisiae (strain ATCC 204508 / S288c) (Baker's yeast).